The primary structure comprises 204 residues: Large ribosomal subunit protein uL4 (204 aa).

Residues 49-75 form a disordered region; it reads TKGRSDVSGGGKKPWRQKGRGGARAGS.

It belongs to the universal ribosomal protein uL4 family. Part of the 50S ribosomal subunit.

In terms of biological role, one of the primary rRNA binding proteins, this protein initially binds near the 5'-end of the 23S rRNA. It is important during the early stages of 50S assembly. It makes multiple contacts with different domains of the 23S rRNA in the assembled 50S subunit and ribosome. Its function is as follows. Forms part of the polypeptide exit tunnel. This is Large ribosomal subunit protein uL4 from Campylobacter jejuni subsp. jejuni serotype O:23/36 (strain 81-176).